The primary structure comprises 343 residues: DNA-directed RNA polymerase subunit alpha (343 aa).

The alpha N-terminal domain (alpha-NTD) stretch occupies residues 1-239 (MGETVTIQKN…DQLNVFVNFE (239 aa)). Positions 255 to 343 (FNPAFLKKVD…ELAKRFEDHY (89 aa)) are alpha C-terminal domain (alpha-CTD).

It belongs to the RNA polymerase alpha chain family. Homodimer. The RNAP catalytic core consists of 2 alpha, 1 beta, 1 beta' and 1 omega subunit. When a sigma factor is associated with the core the holoenzyme is formed, which can initiate transcription.

It catalyses the reaction RNA(n) + a ribonucleoside 5'-triphosphate = RNA(n+1) + diphosphate. Functionally, DNA-dependent RNA polymerase catalyzes the transcription of DNA into RNA using the four ribonucleoside triphosphates as substrates. The sequence is that of DNA-directed RNA polymerase subunit alpha from Bradyrhizobium diazoefficiens (strain JCM 10833 / BCRC 13528 / IAM 13628 / NBRC 14792 / USDA 110).